A 225-amino-acid polypeptide reads, in one-letter code: Uridylate kinase (225 aa).

Residue Asp-6 coordinates Mg(2+). Gly-9–Ser-10 is a binding site for ATP. Gly-44 is a UMP binding site. 2 residues coordinate ATP: Gly-45 and Arg-49. UMP is bound by residues Asp-66 and Thr-114–Thr-120. Positions 120 and 121 each coordinate Mg(2+). 4 residues coordinate ATP: Thr-140, Asn-141, Tyr-146, and Asp-149. A UMP-binding site is contributed by Gly-179. Residue Ser-182 coordinates Mg(2+). Ser-182 contacts ATP.

This sequence belongs to the UMP kinase family. Homohexamer; trimer of dimers.

The protein localises to the cytoplasm. The enzyme catalyses UMP + ATP = UDP + ADP. The protein operates within pyrimidine metabolism; CTP biosynthesis via de novo pathway; UDP from UMP (UMPK route): step 1/1. Inhibited by UTP. Catalyzes the reversible phosphorylation of UMP to UDP, with ATP as the most efficient phosphate donor. The protein is Uridylate kinase (pyrH) of Pyrococcus furiosus (strain ATCC 43587 / DSM 3638 / JCM 8422 / Vc1).